Here is a 173-residue protein sequence, read N- to C-terminus: Shikimate kinase 1 (173 aa).

An ATP-binding site is contributed by 14 to 19 (GAGKST). Residue Ser-18 participates in Mg(2+) binding. Asp-36, Arg-60, and Gly-82 together coordinate substrate. Arg-120 contacts ATP. Residue Arg-140 coordinates substrate. Residue Gln-157 participates in ATP binding.

The protein belongs to the shikimate kinase family. Monomer. Mg(2+) is required as a cofactor.

Its subcellular location is the cytoplasm. It catalyses the reaction shikimate + ATP = 3-phosphoshikimate + ADP + H(+). It functions in the pathway metabolic intermediate biosynthesis; chorismate biosynthesis; chorismate from D-erythrose 4-phosphate and phosphoenolpyruvate: step 5/7. In terms of biological role, catalyzes the specific phosphorylation of the 3-hydroxyl group of shikimic acid using ATP as a cosubstrate. The protein is Shikimate kinase 1 of Citrobacter koseri (strain ATCC BAA-895 / CDC 4225-83 / SGSC4696).